The primary structure comprises 965 residues: Collagen alpha-1(I) chain (965 aa).

The disordered stretch occupies residues 1 to 965 (GGISVPGPMG…PGPPGPPGPP (965 aa)). 11 positions are modified to 4-hydroxyproline: P18, P21, P23, P32, P35, P38, P53, P68, P74, P83, and P89. Residues 26–44 (QGFQGPPGEPGEPGSSGPM) show a composition bias toward low complexity. Basic and acidic residues predominate over residues 56–70 (NGDDGEAGKPGRPGE). K92 is subject to 5-hydroxylysine; alternate. K92 carries O-linked (Gal...) hydroxylysine; alternate glycosylation. The residue at position 98 (S98) is a Phosphoserine. Low complexity predominate over residues 106–122 (DAGPAGPKGEPGSPGEN). A 4-hydroxyproline mark is found at P116, P119, P125, P139, P160, P169, P172, P199, P202, P214, P220, P229, P235, P238, and P253. Low complexity predominate over residues 139–157 (PGASGPAGARGNDGATGAA). The span at 159–171 (PPGPTGPAGPPGF) shows a compositional bias: pro residues. A compositionally biased stretch (low complexity) spans 205-244 (AGAAGPAGNPGADGQPGAKGANGAPGIAGAPGFPGARGPS). K256 bears the 5-hydroxylysine mark. A 4-hydroxyproline mark is found at P262, P265, P269, P278, P293, P299, P308, and P314. Over residues 303-312 (GERGGPGSRG) the composition is skewed to gly residues. K323 bears the 5-hydroxylysine mark. P326, P332, P338, P347, P350, P359, P368, P374, P386, P395, P404, P407, P425, P442, P448, P454, P460, P466, P472, P484, P493, P506, P512, and P521 each carry 4-hydroxyproline. Low complexity predominate over residues 341–367 (KGLTGSPGSPGPDGKTGPPGPAGQDGR). Positions 376–395 (ARGQAGVMGFPGPKGAAGEP) are enriched in low complexity. The segment covering 454–463 (PGEAGKPGEQ) has biased composition (low complexity). Position 533 is a 5-hydroxylysine (K533). 3 positions are modified to 4-hydroxyproline: P539, P554, and P560. The span at 566–580 (SGPSGPAGPTGARGA) shows a compositional bias: low complexity. Phosphoserine is present on S569. A 4-hydroxyproline mark is found at P581, P587, P590, P599, P605, P623, P632, and P641. Positions 593–620 (AGFAGPPGADGQPGAKGEPGDAGAKGDA) are enriched in low complexity. K644 bears the 5-hydroxylysine mark. Residues 649–665 (SAGPPGATGFPGAAGRV) are compositionally biased toward low complexity. P653 and P659 each carry 4-hydroxyproline. A 3-hydroxyproline modification is found at P667. 4-hydroxyproline occurs at positions 668, 677, 680, 716, 725, 743, 752, 755, 761, 776, 782, 788, 796, and 802. Residues 710 to 725 (SGEKGSPGADGPAGAP) show a composition bias toward low complexity. Positions 775–785 (PPGPMGPPGLA) are enriched in pro residues. A 5-hydroxylysine modification is found at K811. 3 positions are modified to 4-hydroxyproline: P819, P822, and P825. Positions 819 to 831 (PGAPGAPGAPGPV) are enriched in pro residues. Residues 851–865 (AGPAGARGPAGPQGP) are compositionally biased toward low complexity. The span at 866–880 (RGDKGETGEQGDRGI) shows a compositional bias: basic and acidic residues. 5-hydroxylysine is present on K869. K881 is modified (5-hydroxylysine; alternate). K881 carries O-linked (Gal...) hydroxylysine; alternate glycosylation. A 4-hydroxyproline mark is found at P896, P899, P917, and P932. The span at 899–932 (PGEQGPSGASGPAGPRGPPGSAGSPGKDGLNGLP) shows a compositional bias: low complexity. Residue P937 is modified to 3-hydroxyproline. At P938 the chain carries 4-hydroxyproline. Residues 950–965 (VGPPGPPGPPGPPGPP) are compositionally biased toward pro residues. P952 bears the 3-hydroxyproline mark. 4-hydroxyproline is present on P953. 3-hydroxyproline is present on P955. 4-hydroxyproline is present on P956. A 3-hydroxyproline modification is found at P958. 3 positions are modified to 4-hydroxyproline: P959, P962, and P965.

It belongs to the fibrillar collagen family. In terms of assembly, trimers of one alpha 2(I) and two alpha 1(I) chains. Post-translationally, contains mostly 4-hydroxyproline. Proline residues at the third position of the tripeptide repeating unit (G-X-Y) are hydroxylated in some or all of the chains. Contains 3-hydroxyproline at a few sites. This modification occurs on the first proline residue in the sequence motif Gly-Pro-Hyp, where Hyp is 4-hydroxyproline. In terms of processing, lysine residues at the third position of the tripeptide repeating unit (G-X-Y) are 5-hydroxylated in some or all of the chains. Post-translationally, O-glycosylated on hydroxylated lysine residues. The O-linked glycan consists of a Glc-Gal disaccharide. As to expression, expressed in bones.

It is found in the secreted. The protein resides in the extracellular space. It localises to the extracellular matrix. In terms of biological role, type I collagen is a member of group I collagen (fibrillar forming collagen). This Acratocnus sp. (strain SLP-2019) (Ground sloth) protein is Collagen alpha-1(I) chain.